A 518-amino-acid polypeptide reads, in one-letter code: Metalloprotease TIKI2 (518 aa).

An N-terminal signal peptide occupies residues 1-22 (MNCQSGLRWLVTLCAFFQVGSA). The Extracellular segment spans residues 23 to 499 (RDTHESTRQC…SALDSAAPNP (477 aa)). Residues Asn-224, Asn-233, Asn-282, Asn-325, and Asn-340 are each glycosylated (N-linked (GlcNAc...) asparagine). Residues 500 to 517 (TYALTCFLACLISQLLFA) form a helical membrane-spanning segment. Residue Ser-518 is a topological domain, cytoplasmic.

It belongs to the TIKI family. Mn(2+) is required as a cofactor. The cofactor is Co(2+).

It localises to the cell membrane. Its function is as follows. Metalloprotease that acts as a negative regulator of the Wnt signaling pathway by mediating the cleavage of the N-terminal residues of a subset of Wnt proteins. Following cleavage, Wnt proteins become oxidized and form large disulfide-bond oligomers, leading to their inactivation. The chain is Metalloprotease TIKI2 (trabd2b) from Danio rerio (Zebrafish).